Here is a 156-residue protein sequence, read N- to C-terminus: Ribosomal RNA large subunit methyltransferase H (156 aa).

Residues Leu73, Gly104, and 123–128 contribute to the S-adenosyl-L-methionine site; that span reads VSSLTL.

The protein belongs to the RNA methyltransferase RlmH family. Homodimer.

It is found in the cytoplasm. It catalyses the reaction pseudouridine(1915) in 23S rRNA + S-adenosyl-L-methionine = N(3)-methylpseudouridine(1915) in 23S rRNA + S-adenosyl-L-homocysteine + H(+). Its function is as follows. Specifically methylates the pseudouridine at position 1915 (m3Psi1915) in 23S rRNA. The sequence is that of Ribosomal RNA large subunit methyltransferase H from Burkholderia mallei (strain NCTC 10247).